Reading from the N-terminus, the 26-residue chain is GTP-binding protein Rheb (26 aa).

GTP contacts are provided by serine 1, serine 2, valine 13, tyrosine 16, and threonine 19. Serine 1 contacts Mg(2+). The Effector region motif lies at 16–24; that stretch reads YDPTIENTF. Threonine 19 contributes to the Mg(2+) binding site.

Belongs to the small GTPase superfamily. Rheb family.

The enzyme catalyses GTP + H2O = GDP + phosphate + H(+). Functionally, binds GTP and exhibits intrinsic GTPase activity. This chain is GTP-binding protein Rheb, found in Crocodylus siamensis (Siamese crocodile).